Reading from the N-terminus, the 498-residue chain is MRINPTTSGPGVSTLEKKKSGRIAQIIGPVLDVTFPPGKMPNIYNALVVKGRDTGGQEINVTCEVQQLLGNNRVRAVAMSATDGLTRGMEVIDTGAPLSVPVGGATLGRIFNVLGEPVDELGPVDTRTTSPIHRSAPAFIQLDTKLSIFETGIKVVDLLAPYRRGGKIGLFGGAGVGKTVLIMELINNIAKAHGGVSVFGGVGERTREGNDLYMEMKESGVINEQNIAESKVALVYGQMNEPPGARMRVGLTALTMAEYFRDVNKQNVLLFIDNIFRFVQAGSEVSALLGRMPSAVGYQPTLSTEMGSLQERITSTKAGSITSIQAVYVPADDLTDPAPATTFAHLDATTVLSRGLAAKGIYPAVDPLDSTSTMLQPRIVGDEHYETAQRVKETLQRYKELQDIISILGLDELSEEDRLTVARARKIERFLSQPFFVAEVFTGSPGKYVGLAETIRGFKLILSGELDGLPEQAFYLVGTIDEATAKAANLEMESDLKK.

172-179 (GGAGVGKT) is a binding site for ATP.

It belongs to the ATPase alpha/beta chains family. F-type ATPases have 2 components, CF(1) - the catalytic core - and CF(0) - the membrane proton channel. CF(1) has five subunits: alpha(3), beta(3), gamma(1), delta(1), epsilon(1). CF(0) has four main subunits: a(1), b(1), b'(1) and c(9-12).

Its subcellular location is the plastid. The protein resides in the chloroplast thylakoid membrane. The catalysed reaction is ATP + H2O + 4 H(+)(in) = ADP + phosphate + 5 H(+)(out). Its function is as follows. Produces ATP from ADP in the presence of a proton gradient across the membrane. The catalytic sites are hosted primarily by the beta subunits. In Oenothera biennis (German evening primrose), this protein is ATP synthase subunit beta, chloroplastic.